The chain runs to 178 residues: Ribosome maturation factor RimM (178 aa).

The PRC barrel domain maps to 101 to 178 (ADEYYWYQLV…VMRVEWDADF (78 aa)).

Belongs to the RimM family. In terms of assembly, binds ribosomal protein uS19.

Its subcellular location is the cytoplasm. In terms of biological role, an accessory protein needed during the final step in the assembly of 30S ribosomal subunit, possibly for assembly of the head region. Essential for efficient processing of 16S rRNA. May be needed both before and after RbfA during the maturation of 16S rRNA. It has affinity for free ribosomal 30S subunits but not for 70S ribosomes. The protein is Ribosome maturation factor RimM of Pseudomonas putida (strain ATCC 47054 / DSM 6125 / CFBP 8728 / NCIMB 11950 / KT2440).